The primary structure comprises 5005 residues: Bridge-like lipid transfer protein family member 1 (5005 aa).

The chain crosses the membrane as a helical span at residues 27-47 (VVWLLVATILSCGWIIYLTYY). 2 disordered regions span residues 692-718 (RPAQKTSERVVSSPSMSPRPPVDPSEL) and 1205-1314 (KSVG…ASVC). Over residues 708-718 (SPRPPVDPSEL) the composition is skewed to pro residues. The segment covering 1205-1215 (KSVGIEGERKT) has biased composition (basic and acidic residues). Residues 1226 to 1240 (SHSSSSSSEENSSSS) are compositionally biased toward low complexity. A compositionally biased stretch (basic and acidic residues) spans 1248 to 1275 (GEKESPSSAADDHSVQKDLLHSARRDDG). Over residues 1278–1303 (SVPTEISGTSPVSPNTQDKSVGQSPL) the composition is skewed to polar residues. Phosphoserine occurs at positions 1301, 1305, and 1323. Residue threonine 1325 is modified to Phosphothreonine. 4 disordered regions span residues 1343–1376 (SDVSRSDENVLDSPKQRRSFGSFPYTPSADSNSF), 1399–1425 (EEFEPISSDEGPGTYPGRKKKKKQMQQ), 1521–1544 (TNKRTSKSSLHRPLDLDTPTSEES), and 1676–1698 (FSENLSPKQDIRGTKTEHPMIGT). Phosphoserine occurs at positions 1355 and 1406. Residues 1521 to 1530 (TNKRTSKSSL) show a composition bias toward basic residues. Positions 1684–1693 (QDIRGTKTEH) are enriched in basic and acidic residues. Residues serine 1805 and serine 1808 each carry the phosphoserine modification. Disordered stretches follow at residues 1927-1991 (RGGV…PLMP), 2165-2192 (PAQPLKPPATVDQEHEEGLGLDNGGGLQ), 2265-2288 (TSGDTATDSPVHVGRAGMPVKESP), 2367-2387 (ESPVTKSGHNSLPTGVAPNLP), 2400-2420 (SSDQNTLDGTHSQHSTSQDDV), and 2598-2677 (TAGS…KDVV). Composition is skewed to polar residues over residues 1931–1948 (LTSNNSSDSPTGSGYNTD) and 1959–1971 (TSPSSDINGNSVS). Polar residues-rich tracts occupy residues 2367–2379 (ESPVTKSGHNSLP), 2400–2418 (SSDQNTLDGTHSQHSTSQD), and 2598–2608 (TAGSASPTPTF). A phosphoserine mark is found at serine 2601 and serine 2603. Low complexity predominate over residues 2619–2638 (SDFSRSSRGSLNGGNRVNNA). Positions 2643-2665 (ANNENNKKESRNKNSLGRSERRT) are enriched in basic and acidic residues. A Phosphoserine modification is found at serine 2755. The interval 2928-2967 (RQPSTAPQPMKEDIATPLPSEKTPTSVNQTPIETNEFPQL) is disordered. The span at 2949–2964 (KTPTSVNQTPIETNEF) shows a compositional bias: polar residues. 3 positions are modified to phosphoserine: serine 3562, glutamate 3577, and serine 3653. 6 disordered regions span residues 3614 to 3662 (YSRS…TFNI), 3686 to 3744 (SSNS…ERFY), 3821 to 3843 (RRSYDRSSRSLDQDSPSKKKKFQ), 3935 to 3954 (KTNTLLPPQPPPIPSAKGKG), 4089 to 4145 (TTYP…SSSS), and 4325 to 4396 (QSAS…ASQQ). Residues 3686-3711 (SSNSEGSCSVFSSPKTTGGFSPSVPF) are compositionally biased toward polar residues. A compositionally biased stretch (acidic residues) spans 3727-3736 (EDSEKDEKDE). Over residues 3821-3837 (RRSYDRSSRSLDQDSPS) the composition is skewed to basic and acidic residues. Over residues 4097 to 4112 (SPGSNAPQTGAKTSAS) the composition is skewed to polar residues. A compositionally biased stretch (low complexity) spans 4117 to 4145 (PGSSGLGSPLGRSRHSSSQSDLTGSSSSS). Serine 4124 carries the post-translational modification Phosphoserine. The segment covering 4325–4358 (QSASFTHMPQSPNVFNEHMTNNTMSPGTAAQSLK) has biased composition (polar residues). Residues 4359-4372 (SPASIRSRSVSDSS) show a composition bias toward low complexity. Positions 4381–4396 (KTSTPVNKSNKAASQQ) are enriched in polar residues.

Highly expressed in testis and ovary. Weakly or not expressed in other tissues.

It is found in the cell membrane. It localises to the endoplasmic reticulum membrane. Its subcellular location is the mitochondrion membrane. Functionally, tube-forming lipid transport protein which provides phosphatidylethanolamine for glycosylphosphatidylinositol (GPI) anchor synthesis in the endoplasmic reticulum. Plays a role in endosomal trafficking and endosome recycling. Also involved in the actin cytoskeleton and cilia structural dynamics. Acts as a regulator of phagocytosis. This chain is Bridge-like lipid transfer protein family member 1 (Bltp1), found in Mus musculus (Mouse).